Here is a 237-residue protein sequence, read N- to C-terminus: MRPSGRTAQQIRPVTITRNFTKHAEGSVLIEFGETKVLCNASVERGVPRFLKGKGQGWVTAEYSMLPRATHTRSAREASRGKQGGRTLEIQRLIGRSLRTCIDMSALGEHTITIDCDVIQADGGTRTASITGACVALVDALNWMRAQGMVKVNPLKEMVAAISVGILDGEPVSDLEYIEDSKADTDMNIVMTEAGKFIEIQGTAEGEAFSFDEMNSLVEMARHSIRELIDIQKQALA.

Residues R86 and 124–126 (GTR) each bind phosphate.

Belongs to the RNase PH family. In terms of assembly, homohexameric ring arranged as a trimer of dimers.

The catalysed reaction is tRNA(n+1) + phosphate = tRNA(n) + a ribonucleoside 5'-diphosphate. In terms of biological role, phosphorolytic 3'-5' exoribonuclease that plays an important role in tRNA 3'-end maturation. Removes nucleotide residues following the 3'-CCA terminus of tRNAs; can also add nucleotides to the ends of RNA molecules by using nucleoside diphosphates as substrates, but this may not be physiologically important. Probably plays a role in initiation of 16S rRNA degradation (leading to ribosome degradation) during starvation. This is Ribonuclease PH from Idiomarina loihiensis (strain ATCC BAA-735 / DSM 15497 / L2-TR).